We begin with the raw amino-acid sequence, 326 residues long: D-alanine--D-alanine ligase (326 aa).

Positions 114–313 constitute an ATP-grasp domain; it reads KRVWLQHGLR…YAELCVSIVS (200 aa). 140–195 lines the ATP pocket; sequence PDRLGLPLILKPPHEGSTVGITKVAGYSDMKEGYAQAAKFDDEVLAEQFIAGRELT. The Mg(2+) site is built by Asp-267, Glu-280, and Asn-282.

The protein belongs to the D-alanine--D-alanine ligase family. Mg(2+) serves as cofactor. Requires Mn(2+) as cofactor.

It localises to the cytoplasm. It catalyses the reaction 2 D-alanine + ATP = D-alanyl-D-alanine + ADP + phosphate + H(+). It functions in the pathway cell wall biogenesis; peptidoglycan biosynthesis. In terms of biological role, cell wall formation. The polypeptide is D-alanine--D-alanine ligase (Bordetella petrii (strain ATCC BAA-461 / DSM 12804 / CCUG 43448)).